A 255-amino-acid polypeptide reads, in one-letter code: Tumor necrosis factor receptor superfamily member 9 (255 aa).

A signal peptide spans 1–23 (MGNSCYNIVATLLLVLNFERTRS). TNFR-Cys repeat units follow at residues 24 to 45 (LQDP…NQIC), 47 to 86 (PCPP…NAEC), 87 to 118 (DCTP…KGCK), and 119 to 159 (DCCF…VVCG). Over 24–186 (LQDPCSNCPA…PAREPGHSPQ (163 aa)) the chain is Extracellular. Disulfide bonds link Cys28–Cys37, Cys31–Cys45, Cys48–Cys62, Cys65–Cys78, Cys68–Cys86, Cys88–Cys94, Cys99–Cys106, Cys102–Cys117, and Cys121–Cys133. Residues Asn138 and Asn149 are each glycosylated (N-linked (GlcNAc...) asparagine). A disulfide bridge connects residues Cys139 and Cys158. The interval 161–180 (SPADLSPGASSVTPPAPARE) is disordered. Residues 187–213 (IISFFLALTSTALLFLLFFLTLRFSVV) traverse the membrane as a helical segment. Topologically, residues 214–255 (KRGRKKLLYIFKQPFMRPVQTTQEEDGCSCRFPEEEEGGCEL) are cytoplasmic. Positions 214 to 255 (KRGRKKLLYIFKQPFMRPVQTTQEEDGCSCRFPEEEEGGCEL) are interaction with LRR-1.

Predominantly homodimeric, but may also exist as a monomer. Interacts with TRAF1, TRAF2 and TRAF3. Interacts with LRR-repeat protein 1/LRR-1. Expressed on the surface of activated T-cells.

It localises to the cell membrane. In terms of biological role, receptor for TNFSF9/4-1BBL. Conveys a signal that enhances CD8(+) T-cell survival, cytotoxicity, and mitochondrial activity, thereby promoting immunity against viruses and tumors. The polypeptide is Tumor necrosis factor receptor superfamily member 9 (TNFRSF9) (Homo sapiens (Human)).